The primary structure comprises 544 residues: Pectinesterase 3 (544 aa).

N-linked (GlcNAc...) asparagine glycosylation is found at N174, N257, and N291. The substrate site is built by T306 and Q336. D359 functions as the Proton donor in the catalytic mechanism. The active-site Nucleophile is D380. R448 and W450 together coordinate substrate. The N-linked (GlcNAc...) asparagine glycan is linked to N532.

In the N-terminal section; belongs to the PMEI family. This sequence in the C-terminal section; belongs to the pectinesterase family.

It localises to the secreted. Its subcellular location is the cell wall. It carries out the reaction [(1-&gt;4)-alpha-D-galacturonosyl methyl ester](n) + n H2O = [(1-&gt;4)-alpha-D-galacturonosyl](n) + n methanol + n H(+). The protein operates within glycan metabolism; pectin degradation; 2-dehydro-3-deoxy-D-gluconate from pectin: step 1/5. Functionally, acts in the modification of cell walls via demethylesterification of cell wall pectin. In Solanum lycopersicum (Tomato), this protein is Pectinesterase 3 (PME3).